Reading from the N-terminus, the 340-residue chain is Nuclear hormone receptor family member nhr-197 (340 aa).

Positions 1–75 (MNCVVCSGRA…VGMTLAPLND (75 aa)) form a DNA-binding region, nuclear receptor. 2 NR C4-type zinc fingers span residues 3–23 (CVVC…CFAC) and 39–58 (CKRI…CRAC). In terms of domain architecture, NR LBD spans 98 to 337 (KNDKNYSHFV…KRIMQDLFSN (240 aa)).

It belongs to the nuclear hormone receptor family.

It localises to the nucleus. In terms of biological role, orphan nuclear receptor. In Caenorhabditis elegans, this protein is Nuclear hormone receptor family member nhr-197 (nhr-197).